Consider the following 273-residue polypeptide: Putative phosphoenolpyruvate synthase regulatory protein (273 aa).

153–160 (AVSRAGKT) serves as a coordination point for ADP.

This sequence belongs to the pyruvate, phosphate/water dikinase regulatory protein family. PSRP subfamily.

The catalysed reaction is [pyruvate, water dikinase] + ADP = [pyruvate, water dikinase]-phosphate + AMP + H(+). It carries out the reaction [pyruvate, water dikinase]-phosphate + phosphate + H(+) = [pyruvate, water dikinase] + diphosphate. In terms of biological role, bifunctional serine/threonine kinase and phosphorylase involved in the regulation of the phosphoenolpyruvate synthase (PEPS) by catalyzing its phosphorylation/dephosphorylation. The chain is Putative phosphoenolpyruvate synthase regulatory protein from Xylella fastidiosa (strain M23).